A 20-amino-acid polypeptide reads, in one-letter code: Cytotoxin drCT-1 (20 aa).

The protein belongs to the three-finger toxin family. Short-chain subfamily. Type IA cytotoxin sub-subfamily. As to quaternary structure, monomer in solution; Homodimer and oligomer in the presence of negatively charged lipids forming a pore with a size ranging between 20 and 30 Angstroms. Expressed by the venom gland.

Its subcellular location is the secreted. The protein localises to the target cell membrane. This three-finger cytotoxin has antiproliferative, cytotoxic and apoptotic activities. Both in vivo and in vitro experimental results suggests that this protein possess anticancer potential. Also shows neurotoxicity, cardiotoxicity and myotoxicity. This Daboia russelii (Russel's viper) protein is Cytotoxin drCT-1.